Reading from the N-terminus, the 89-residue chain is Antitoxin RelB (89 aa).

This sequence belongs to the phD/YefM antitoxin family. Interacts with toxin RelE, which neutralizes its toxicity. Also interacts with toxins RelG and RelK in vitro, in M.smegmatis coexpression with non-cognate toxins neutralizes the toxicity of RelG while increasing the toxicity of RelK.

In terms of biological role, antitoxin component of a type II toxin-antitoxin (TA) system. Upon expression in M.smegmatis neutralizes the effect of toxin RelE. Induces its own promoter, in combination with RelE represses its own promoter. Binds DNA in complex with toxin RelE but not alone. This chain is Antitoxin RelB (relB), found in Mycobacterium tuberculosis (strain ATCC 25618 / H37Rv).